A 92-amino-acid chain; its full sequence is Small ribosomal subunit protein uS19c (92 aa).

It belongs to the universal ribosomal protein uS19 family.

The protein resides in the plastid. Its function is as follows. Protein S19 forms a complex with S13 that binds strongly to the 16S ribosomal RNA. In Cuscuta reflexa (Southern Asian dodder), this protein is Small ribosomal subunit protein uS19c.